The following is a 566-amino-acid chain: MOB kinase activator-like 2 (566 aa).

Disordered regions lie at residues 28 to 57 and 74 to 118; these read ADAT…SSLS and GRAV…GAQA. Residues 35–57 show a composition bias toward low complexity; the sequence is SSTAPQTPTASTPRPSSSHSSLS. A compositionally biased stretch (gly residues) spans 85–115; that stretch reads QNGGKGNASGAGGGAGGGGAGGASGGTGGTG. Zn(2+)-binding residues include Cys-209, Cys-214, His-289, and His-294. Disordered stretches follow at residues 346 to 407 and 498 to 541; these read GGCQ…SASA and FSNN…QCNA. Low complexity predominate over residues 367–388; it reads LQHQSLQQQQQHHNSSSNSTSS. Polar residues predominate over residues 394-407; that stretch reads VNSQSNNGSTSASA. Positions 498 to 507 are enriched in low complexity; sequence FSNNNNNNHN. The segment covering 508–526 has biased composition (basic residues); sequence LNHHHHHHHHHGHHGHHHA.

This sequence belongs to the MOB1/phocein family. Interacts with and activates trc, also interacts with wts.

Its subcellular location is the cytoplasm. It localises to the nucleus. In terms of biological role, required for the normal morphogenesis of a variety of polarized outgrowths including epidermal hairs, bristles, arista laterals, and dendrites. In Drosophila melanogaster (Fruit fly), this protein is MOB kinase activator-like 2 (Mob2).